Reading from the N-terminus, the 457-residue chain is tRNA-2-methylthio-N(6)-dimethylallyladenosine synthase (457 aa).

The 118-residue stretch at K3–A120 folds into the MTTase N-terminal domain. Residues C12, C49, C83, C157, C161, and C164 each contribute to the [4Fe-4S] cluster site. One can recognise a Radical SAM core domain in the interval R143–R377. The TRAM domain maps to Q380–I447.

Belongs to the methylthiotransferase family. MiaB subfamily. Monomer. It depends on [4Fe-4S] cluster as a cofactor.

It localises to the cytoplasm. It catalyses the reaction N(6)-dimethylallyladenosine(37) in tRNA + (sulfur carrier)-SH + AH2 + 2 S-adenosyl-L-methionine = 2-methylsulfanyl-N(6)-dimethylallyladenosine(37) in tRNA + (sulfur carrier)-H + 5'-deoxyadenosine + L-methionine + A + S-adenosyl-L-homocysteine + 2 H(+). Its function is as follows. Catalyzes the methylthiolation of N6-(dimethylallyl)adenosine (i(6)A), leading to the formation of 2-methylthio-N6-(dimethylallyl)adenosine (ms(2)i(6)A) at position 37 in tRNAs that read codons beginning with uridine. The chain is tRNA-2-methylthio-N(6)-dimethylallyladenosine synthase from Burkholderia cenocepacia (strain ATCC BAA-245 / DSM 16553 / LMG 16656 / NCTC 13227 / J2315 / CF5610) (Burkholderia cepacia (strain J2315)).